The sequence spans 6930 residues: Replicase polyprotein 1ab (6930 aa).

Residues 10–131 (LKSMVVTTLK…DIDIQIRKYG (122 aa)) form the CoV Nsp1 globular domain. The 27-residue stretch at 149 to 175 (DPGPDVGPYLDFPDNCCPTKPKAKRGG) folds into the BetaCoV Nsp1 C-terminal domain. The CoV Nsp2 N-terminal domain occupies 177–431 (VYLSDQYGFD…ELVEYLIEGI (255 aa)). Positions 312, 315, 331, and 333 each coordinate Zn(2+). Residues 312–333 (CSYCDYYGWTPLKDIGTVNCLC) form a C4 region. One can recognise a CoV Nsp2 middle domain in the interval 432-644 (RVDADTLDNP…CDLLTTIMSK (213 aa)). The 127-residue stretch at 646–772 (LTSVKWAGCK…LGKAFRLRGG (127 aa)) folds into the CoV Nsp2 C-terminal domain. Residues 775–885 (SKVTFGDEEV…MYFSLEDAVP (111 aa)) form the Ubiquitin-like 1 domain. The Macro 1 domain maps to 930–1097 (MTTPCGYTKI…LYERALATSF (168 aa)). A disordered region spans residues 1188–1207 (KRPPPIVPQQTVEQQPQEIS). Low complexity predominate over residues 1195-1206 (PQQTVEQQPQEI). Residues 1216–1340 (LVDVVSMSFS…LYRAYFNGVF (125 aa)) form the Macro 2 domain. The DPUP domain maps to 1345–1417 (TAVQDFVVDI…VSKARAYLET (73 aa)). The region spanning 1423 to 1478 (EPLIKVLTTVDGINYSTVLVSTAQSYRAQIGTVFCDGHDWSNKNPMPTDEGTHLYK) is the Ubiquitin-like 2 domain. In terms of domain architecture, Peptidase C16 spans 1492-1757 (EYYGVDDSNI…RTTIDPDFSK (266 aa)). Cys1533 (for PL-PRO activity) is an active-site residue. 4 residues coordinate Zn(2+): Cys1610, Cys1613, Cys1645, and Cys1647. A C4-type zinc finger spans residues 1610–1647 (CEHCGVSQMVFTGTDACTFYGSVVLDDLYAPVSVVCQC). Residues His1694 and Asp1708 each act as for PL-PRO activity in the active site. A Nucleic acid-binding domain is found at 1770–1870 (PIEVVAAPKL…PLLSTVVVNT (101 aa)). Residues 1883 to 2012 (PVNNETSEEP…KTADFVRSTN (130 aa)) form the G2M domain. Transmembrane regions (helical) follow at residues 2015–2035 (SKCV…WLLV), 2040–2060 (IVKV…TCVL), and 2081–2101 (YMLY…WLSE). The segment at 2015 to 2238 (SKCVGLLCLF…IVIAFLWLCY (224 aa)) is HD1. The 3Ecto domain occupies 2105–2162 (PSLVTRFKYFLGIVMPCDYVLVNETGTGWLHHLCMAGMDSLDYPALRMQQHRYGSPYN). An intrachain disulfide couples Cys2121 to Cys2138. 3 helical membrane passes run 2162–2182 (NYTY…YTPA), 2183–2203 (LPIV…PIPL), and 2218–2238 (LVPF…WLCY). The segment at 2239–2329 (KGFLHVRYGC…QFKRPIIHTD (91 aa)) is Y1. Positions 2239-2610 (KGFLHVRYGC…MVTPFKIIGG (372 aa)) constitute a CoV Nsp3 Y domain. His2243, Cys2248, Cys2253, Cys2256, Cys2289, His2292, Cys2296, and Cys2299 together coordinate Zn(2+). Residues 2243–2256 (HVRYGCNNVACLMC) form a ZF1 region. Residues 2289-2299 (CTKHNWNCVSC) are ZF2. The Y2 stretch occupies residues 2330 to 2425 (EAYYEVTSVE…LVDKRMVGVV (96 aa)). The tract at residues 2330 to 2610 (EAYYEVTSVE…MVTPFKIIGG (281 aa)) is coV-Y. The segment at 2426 to 2509 (GDDATIARAM…SCIRLCHQEG (84 aa)) is Y3. Residues 2510-2610 (WEWTTDSWNN…MVTPFKIIGG (101 aa)) are Y4. A run of 7 helical transmembrane segments spans residues 2621–2641 (LIHV…PWYI), 2719–2739 (VGTT…SVCY), 2865–2885 (AFDL…AVDI), 2887–2907 (TSIL…YYLL), 2916–2936 (YSGV…VLCL), 2946–2966 (IYAM…ACMM), and 2970–2990 (FLIM…IVVV). The segment at 2621 to 2990 (LIHVFMLLVV…WVTVLYIVVV (370 aa)) is HD2. Positions 3007–3103 (VQVGDLAFHS…RCSVASAALQ (97 aa)) constitute a Nsp4C domain. A Peptidase C30 domain is found at 3104–3409 (AGLTRMAHPS…GRQMLGVKLQ (306 aa)). Residues His3144 and Cys3248 each act as for 3CL-PRO activity in the active site. 7 helical membrane-spanning segments follow: residues 3423 to 3443 (FAII…WTFV), 3449 to 3469 (TLLL…SLLI), 3474 to 3494 (TYLT…NFQY), 3517 to 3537 (VIGT…LLSV), 3569 to 3589 (VAIS…GVAC), 3592 to 3612 (LYAA…ILLL), and 3620 to 3640 (LVCY…FNLI). The tract at residues 3423 to 3640 (FAIIFVLTIL…TCYFGVFNLI (218 aa)) is HD3. Residues 3700-3782 (SNMTDLKCTS…SILENNSVLQ (83 aa)) enclose the RdRp Nsp7 cofactor domain. The RdRp Nsp8 cofactor domain maps to 3783–3982 (AVASEFSNLS…QQATSPVKLQ (200 aa)). The 112-residue stretch at 3983 to 4094 (NNELMPQTVK…GTLACTVRLH (112 aa)) folds into the Nsp9 ssRNA-binding domain. Residues 4095 to 4233 (AGSATEVASN…CSSLREINLQ (139 aa)) enclose the ExoN/MTase coactivator domain. The Zn(2+) site is built by Cys4168, Cys4171, His4177, Cys4184, Cys4211, Cys4214, Cys4222, and Cys4224. Zinc fingers lie at residues 4168–4184 (CLYC…SGVC) and 4211–4224 (CAVC…GCPC). In terms of domain architecture, NiRAN spans 4239 to 4494 (FLNRVRGTSG…AAECHVDGDF (256 aa)). Mn(2+) contacts are provided by Asn4442 and Asp4451. A Nsp12 Interface domain is found at 4499–4597 (RVWDICKYDY…MNQDIRQHAQ (99 aa)). Positions 4528, 4534, 4539, 4543, and 4720 each coordinate Zn(2+). In terms of domain architecture, Nsp12 RNA-dependent RNA polymerase spans 4598-5165 (RLSLRELLVY…NMYMESATLQ (568 aa)). Positions 4600–4814 (SLRELLVYAA…HQKMLKSIAA (215 aa)) are rdRp Fingers N-ter. The rdRp Palm N-ter stretch occupies residues 4815-4853 (ARGASVVIGTTKFYGGWNRMLRTLCEGVENPHLMGWDYP). In terms of domain architecture, RdRp catalytic spans 4845-5007 (PHLMGWDYPK…CYNADYAQKG (163 aa)). A rdRp Fingers C-ter region spans residues 4854-4912 (KCDRAMPNLLRIFASLILARKHATCCNASERFYRLANECAQVLSEMVLCGGGFYVKPGG). Positions 4875, 4878, and 4879 each coordinate Zn(2+). A rdRp Palm C-ter region spans residues 4913–5048 (TSSGDSTTAY…TKGPHEFCSQ (136 aa)). Residues Ser4992, Asp4993, and Asp4994 contribute to the active site. Residues 5049 to 5165 (HTMLVDMKGE…NMYMESATLQ (117 aa)) are rdRp Thumb. The CV ZBD domain occupies 5166–5278 (SVGTCVVCNS…ADFNSLATCD (113 aa)). Zn(2+) is bound by residues Cys5170, Cys5173, Cys5181, Cys5184, Cys5191, Cys5194, His5198, His5204, Cys5215, Cys5220, Cys5237, and His5240. One can recognise a (+)RNA virus helicase ATP-binding domain in the interval 5412–5603 (TKLVGLYPAM…MVAVGPDIFL (192 aa)). Position 5447–5454 (5447–5454 (GPPGTGKS)) interacts with ATP. A (+)RNA virus helicase C-terminal domain is found at 5604–5778 (ATCYRCPKEI…VTVGLFKDCA (175 aa)). Residues 5838–6056 (LFITREQAIR…RCLAIHDCFC (219 aa)) enclose the ExoN domain. Active-site residues include Asp5856, Glu5858, and Glu5957. Residues Cys5973, Cys5976, Cys5992, His5995, His6026, Cys6030, and His6033 each contribute to the Zn(2+) site. Residues His6037 and Asp6042 contribute to the active site. Cys6048 contributes to the Zn(2+) binding site. An N7-MTase domain is found at 6065 to 6296 (YPIIANELAI…NLWSTFVKLQ (232 aa)). Residue 6100–6106 (DIGNPKA) participates in S-adenosyl-L-methionine binding. Residues 6180-6194 (CNGGSLYVNQHAFHT) are gpppA-binding. Zn(2+) contacts are provided by Cys6218, Cys6242, Cys6253, and His6256. A Nsp15 N-terminal oligomerization domain is found at 6297 to 6357 (SLENVAYNVL…NVAFELWAKR (61 aa)). The AV-Nsp11N/CoV-Nsp15M domain occupies 6358 to 6476 (SVNVVPEVKL…YAMRKDGAFV (119 aa)). Residues 6493-6630 (QPRTQLEIDF…KGGKISTFYP (138 aa)) form the NendoU domain. Active-site residues include His6523, His6537, Lys6576, Lys6679, Asp6763, Lys6803, and Glu6836. The region spanning 6635 to 6928 (KQDWKPGYSM…DIGVRGVACS (294 aa)) is the Nidovirus-type SAM-dependent 2'-O-MTase domain.

This sequence belongs to the coronaviruses polyprotein 1ab family. Interacts with host PHB and PHB2. As to quaternary structure, interacts with papain-like protease nsp3 and non-structural protein 6. In terms of assembly, monomer. Homodimer. Only the homodimer shows catalytic activity. Interacts with nsp8 and nsp12 to form the replication-transcription complex (RTC): nsp12, nsp7, two subunits of nsp8, and up to two subunits of nsp13. As to quaternary structure, interacts with nsp7, nsp13 and nsp12 to form the replication-transcription complex (RTC): nsp12, nsp7, two subunits of nsp8, and up to two subunits of nsp13. In terms of assembly, interacts with nsp12. Interacts with proofreading exoribonuclease nsp14 and 2'-O-methyltransferase nsp16; these interactions enhance nsp14 and nsp16 enzymatic activities. As to quaternary structure, interacts with nsp7 and nsp8 to form the replication-transcription complex (RTC): nsp12, nsp7, two subunits of nsp8, and up to two subunits of nsp13. Interacts with nsp9. In terms of assembly, interacts with nsp8 to form the replication-transcription complex (RTC): nsp12, nsp7, two subunits of nsp8, and up to two subunits of nsp13. It depends on Mn(2+) as a cofactor. Requires Mg(2+) as cofactor. In terms of processing, specific enzymatic cleavages in vivo by its own proteases yield mature proteins. 3CL-PRO and PL-PRO proteinases are autocatalytically processed.

The protein resides in the host membrane. Its subcellular location is the host cytoplasm. It localises to the host perinuclear region. It is found in the host endoplasmic reticulum-Golgi intermediate compartment. It carries out the reaction RNA(n) + a ribonucleoside 5'-triphosphate = RNA(n+1) + diphosphate. The catalysed reaction is ATP + H2O = ADP + phosphate + H(+). It catalyses the reaction Thiol-dependent hydrolysis of ester, thioester, amide, peptide and isopeptide bonds formed by the C-terminal Gly of ubiquitin (a 76-residue protein attached to proteins as an intracellular targeting signal).. The enzyme catalyses a 5'-end (N(7)-methyl 5'-triphosphoguanosine)-ribonucleoside in mRNA + S-adenosyl-L-methionine = a 5'-end (N(7)-methyl 5'-triphosphoguanosine)-(2'-O-methyl-ribonucleoside) in mRNA + S-adenosyl-L-homocysteine + H(+). It carries out the reaction uridylyl-uridylyl-ribonucleotide-RNA = a 3'-end uridylyl-2',3'-cyclophospho-uridine-RNA + a 5'-end dephospho-ribonucleoside-RNA. The catalysed reaction is a 5'-end diphospho-ribonucleoside in mRNA + GTP + H(+) = a 5'-end (5'-triphosphoguanosine)-ribonucleoside in mRNA + diphosphate. It catalyses the reaction a 5'-end (5'-triphosphoguanosine)-ribonucleoside in mRNA + S-adenosyl-L-methionine = a 5'-end (N(7)-methyl 5'-triphosphoguanosine)-ribonucleoside in mRNA + S-adenosyl-L-homocysteine. Its function is as follows. The replicase polyprotein of coronaviruses is a multifunctional protein: it contains the activities necessary for the transcription of negative stranded RNA, leader RNA, subgenomic mRNAs and progeny virion RNA as well as proteinases responsible for the cleavage of the polyprotein into functional products. In terms of biological role, inhibits host translation by interacting with the 40S ribosomal subunit. The nsp1-40S ribosome complex further induces an endonucleolytic cleavage near the 5'UTR of host mRNAs, targeting them for degradation. Viral mRNAs are not susceptible to nsp1-mediated endonucleolytic RNA cleavage thanks to the presence of a 5'-end leader sequence and are therefore protected from degradation. By suppressing host gene expression, nsp1 facilitates efficient viral gene expression in infected cells and evasion from host immune response. May play a role in the modulation of host cell survival signaling pathway by interacting with host PHB and PHB2. Indeed, these two proteins play a role in maintaining the functional integrity of the mitochondria and protecting cells from various stresses. Functionally, responsible for the cleavages located at the N-terminus of the replicase polyprotein. In addition, PL-PRO possesses a deubiquitinating/deISGylating activity and processes both 'Lys-48'- and 'Lys-63'-linked polyubiquitin chains from cellular substrates. Participates together with nsp4 in the assembly of virally-induced cytoplasmic double-membrane vesicles necessary for viral replication. Antagonizes innate immune induction of type I interferon by blocking the phosphorylation, dimerization and subsequent nuclear translocation of host IRF3. Also prevents host NF-kappa-B signaling. Its function is as follows. Participates in the assembly of virally-induced cytoplasmic double-membrane vesicles necessary for viral replication. In terms of biological role, cleaves the C-terminus of replicase polyprotein at 11 sites. Recognizes substrates containing the core sequence [ILMVF]-Q-|-[SGACN]. Also able to bind an ADP-ribose-1''-phosphate (ADRP). Plays a role in the initial induction of autophagosomes from host endoplasmic reticulum. Later, limits the expansion of these phagosomes that are no longer able to deliver viral components to lysosomes. Functionally, forms a hexadecamer with nsp8 (8 subunits of each) that may participate in viral replication by acting as a primase. Alternatively, may synthesize substantially longer products than oligonucleotide primers. Its function is as follows. Forms a hexadecamer with nsp7 (8 subunits of each) that may participate in viral replication by acting as a primase. Alternatively, may synthesize substantially longer products than oligonucleotide primers. In terms of biological role, forms a primer, NSP9-pU, which is utilized by the polymerase for the initiation of RNA chains. Interacts with ribosome signal recognition particle RNA (SRP). Together with NSP8, suppress protein integration into the cell membrane, thereby disrupting host immune defenses. Plays a pivotal role in viral transcription by stimulating both nsp14 3'-5' exoribonuclease and nsp16 2'-O-methyltransferase activities. Therefore plays an essential role in viral mRNAs cap methylation. Functionally, RNA-directed RNA polymerase that catalyzes the transcription of viral genomic and subgenomic RNAs. Acts in complex with nsp7 and nsp8 to transcribe both the minus and positive strands of genomic RNA. The kinase-like NiRAN domain of NSP12 attaches one or more nucleotides to the amino terminus of NSP9, forming a covalent RNA-protein intermediate that serves as transcription/replication primer. Subgenomic RNAs (sgRNAs) are formed by discontinuous transcription: The polymerase has the ability to pause at transcription-regulating sequences (TRS) and jump to the leader TRS, resulting in a major deletion. This creates a series of subgenomic RNAs that are replicated, transcribed and translated. In addition, Nsp12 is a subunit of the viral RNA capping enzyme that catalyzes the RNA guanylyltransferase reaction for genomic and sub-genomic RNAs. Subsequently, the NiRAN domain transfers RNA to GDP, and forms the core cap structure GpppA-RNA. Its function is as follows. Multi-functional protein with a zinc-binding domain in N-terminus displaying RNA and DNA duplex-unwinding activities with 5' to 3' polarity. Activity of helicase is dependent on magnesium. In terms of biological role, plays a role in viral RNA synthesis through two distinct activities. The N7-guanine methyltransferase activity plays a role in the formation of the cap structure GpppA-RNA. The proofreading exoribonuclease reduces the sensitivity of the virus to RNA mutagens during replication. This activity acts on both ssRNA and dsRNA in a 3'-5' direction. Plays a role in viral transcription/replication and prevents the simultaneous activation of host cell dsRNA sensors, such as MDA5/IFIH1, OAS, and PKR. Acts by degrading the 5'-polyuridines generated during replication of the poly(A) region of viral genomic and subgenomic RNAs. Catalyzes a two-step reaction in which a 2'3'-cyclic phosphate (2'3'-cP) is first generated by 2'-O transesterification, which is then hydrolyzed to a 3'-phosphate (3'-P). If not degraded, poly(U) RNA would hybridize with poly(A) RNA tails and activate host dsRNA sensors. Functionally, methyltransferase that mediates mRNA cap 2'-O-ribose methylation to the 5'-cap structure of viral mRNAs. N7-methyl guanosine cap is a prerequisite for binding of nsp16. Therefore plays an essential role in viral mRNAs cap methylation which is essential to evade immune system. This Bat coronavirus HKU9 (BtCoV) protein is Replicase polyprotein 1ab (rep).